A 269-amino-acid polypeptide reads, in one-letter code: MKEYNLNDTHLLQLDSQKDPIALHTEDLHVFYGDNEAIKGVDLQFEKNKITALIGPSGCGKSTYLRSLNRMNDGIANSRVTGKIMYKDVDVNTKEVDVYEMRKRIGMVFQRPNPFSKSIYENITFALKQHGEKDKKKLDEIVETSLKQAALWDQVKDNLNKSALALSGGQQQRLCIARAIAMKPDILLLDEPASALDPISTGTVEETLVNLKDDYTIIIVTHNMQQAARISDYTAFFYMGKVIEYDHTRKIFTRPKIQATEDYVSGHFG.

Positions 23 to 264 (LHTEDLHVFY…PKIQATEDYV (242 aa)) constitute an ABC transporter domain. 55–62 (GPSGCGKS) is a binding site for ATP.

Belongs to the ABC transporter superfamily. Phosphate importer (TC 3.A.1.7) family. As to quaternary structure, the complex is composed of two ATP-binding proteins (PstB), two transmembrane proteins (PstC and PstA) and a solute-binding protein (PstS).

The protein resides in the cell membrane. The catalysed reaction is phosphate(out) + ATP + H2O = ADP + 2 phosphate(in) + H(+). Part of the ABC transporter complex PstSACB involved in phosphate import. Responsible for energy coupling to the transport system. The polypeptide is Phosphate import ATP-binding protein PstB 2 (Enterococcus faecalis (strain ATCC 700802 / V583)).